The following is a 614-amino-acid chain: MSRGRSFIFYFVLFLFFGSSALYSQVTGDLAGDRQALLDFLNNIIHPRSLAWNTSSPVCTTWPGVTCDIDGTRVTALHLPGASLLGVIPPGTISRLSELQILSLRSNGLRGPFPIDFLQLKKLKAISLGNNRFSGPLPSDYATWTNLTVLDLYSNRFNGSIPAGFANLTGLVSLNLAKNSFSGEIPDLNLPGLRRLNFSNNNLTGSIPNSLKRFGNSAFSGNNLVFENAPPPAVVSFKEQKKNGIYISEPAILGIAISVCFVIFFVIAVVIIVCYVKRQRKSETEPKPDKLKLAKKMPSEKEVSKLGKEKNIEDMEDKSEINKVMFFEGSNLAFNLEDLLIASAEFLGKGVFGMTYKAVLEDSKVIAVKRLKDIVVSRKDFKHQMEIVGNIKHENVAPLRAYVCSKEEKLMVYDYDSNGSLSLRLHGKNADEGHVPLNWETRLRFMIGVAKGLGHIHTQNLAHGNIKSSNVFMNSEGYGCISEAGLPLLTNPVVRADSSARSVLRYRAPEVTDTRRSTPESDIYSFGILMLETLTGRSIMDDRKEGIDLVVWVNDVISKQWTGEVFDLELVKTPNVEAKLLQMLQLGTSCTAMVPAKRPDMVKVVETLEEIERD.

The N-terminal stretch at 1–21 (MSRGRSFIFYFVLFLFFGSSA) is a signal peptide. Over 22–251 (LYSQVTGDLA…KNGIYISEPA (230 aa)) the chain is Extracellular. Asn53 is a glycosylation site (N-linked (GlcNAc...) asparagine). LRR repeat units lie at residues 71–95 (GTRV…TISR), 96–120 (LSEL…FLQL), 121–146 (KKLK…TWTN), 148–167 (TVLD…GFAN), 168–190 (LTGL…DLNL), and 191–214 (PGLR…LKRF). 3 N-linked (GlcNAc...) asparagine glycosylation sites follow: Asn146, Asn158, and Asn167. 2 N-linked (GlcNAc...) asparagine glycosylation sites follow: Asn197 and Asn202. The helical transmembrane segment at 252–272 (ILGIAISVCFVIFFVIAVVII) threads the bilayer. The Cytoplasmic portion of the chain corresponds to 273–614 (VCYVKRQRKS…VETLEEIERD (342 aa)). The Protein kinase domain maps to 341–611 (IASAEFLGKG…VKVVETLEEI (271 aa)). The residue at position 343 (Ser343) is a Phosphoserine. ATP is bound by residues 347 to 355 (LGKGVFGMT) and Lys369. Ser420 is modified (phosphoserine). Residues Thr441, Thr514, and Thr591 each carry the phosphothreonine modification. One copy of the LRR 7 repeat lies at 578–601 (AKLLQMLQLGTSCTAMVPAKRPDM).

The protein belongs to the protein kinase superfamily. Ser/Thr protein kinase family.

The protein localises to the cell membrane. The polypeptide is Inactive leucine-rich repeat receptor-like serine/threonine-protein kinase At5g24100 (Arabidopsis thaliana (Mouse-ear cress)).